Here is a 685-residue protein sequence, read N- to C-terminus: Phenoloxidase subunit 1 (685 aa).

Residues 1–51 constitute a propeptide that is removed on maturation; the sequence is MSDAKNNLLLFFDRPSEPCFMQKGEENAVFEIPDNYYPEKYQRVSNAIGNR. The N-linked (GlcNAc...) asparagine glycan is linked to asparagine 184. Positions 209, 213, and 239 each coordinate Cu cation. 2 N-linked (GlcNAc...) asparagine glycosylation sites follow: asparagine 254 and asparagine 324. Residue glutamate 351 is the Proton acceptor of the active site. Histidine 366, histidine 370, and histidine 406 together coordinate Cu cation. 2 N-linked (GlcNAc...) asparagine glycosylation sites follow: asparagine 491 and asparagine 540. Disulfide bonds link cysteine 581/cysteine 623 and cysteine 583/cysteine 630.

Heterodimer. Cu(2+) serves as cofactor. In terms of processing, the N-terminus is blocked. In terms of tissue distribution, synthesized by hemocytes and released into the hemolymph plasma.

Its subcellular location is the secreted. It catalyses the reaction 2 L-dopa + O2 = 2 L-dopaquinone + 2 H2O. The enzyme catalyses L-tyrosine + O2 = L-dopaquinone + H2O. In terms of biological role, this is a copper-containing oxidase that functions in the formation of pigments such as melanins and other polyphenolic compounds. Catalyzes the rate-limiting conversions of tyrosine to DOPA, DOPA to DOPA-quinone and possibly 5,6 dihydroxyindole to indole-5'6 quinone. The polypeptide is Phenoloxidase subunit 1 (Bombyx mori (Silk moth)).